Here is a 402-residue protein sequence, read N- to C-terminus: Phosphoribulokinase, chloroplastic (402 aa).

The transit peptide at 1–51 directs the protein to the chloroplast; the sequence is MAVCTVYTIPTTTHLGSSFNQNNKQVFFNYKRSSSSNNTLFTTRPSYVITC. C67 and C106 are joined by a disulfide.

Belongs to the phosphoribulokinase family.

Its subcellular location is the plastid. The protein resides in the chloroplast. It carries out the reaction D-ribulose 5-phosphate + ATP = D-ribulose 1,5-bisphosphate + ADP + H(+). It participates in carbohydrate biosynthesis; Calvin cycle. With respect to regulation, light regulated via thioredoxin by reversible oxidation/reduction of sulfhydryl/disulfide groups. This Spinacia oleracea (Spinach) protein is Phosphoribulokinase, chloroplastic.